The following is a 56-amino-acid chain: PI-actitoxin-Afv2a (56 aa).

In terms of domain architecture, BPTI/Kunitz inhibitor spans 5–55 (CLLPMKVGFCRAHVPRFYYNSSSGKCEGFTYGGCGANANNFQTKAQCEKAC). Cystine bridges form between Cys5-Cys55, Cys14-Cys38, and Cys30-Cys51.

The protein belongs to the venom Kunitz-type family. Sea anemone type 2 potassium channel toxin subfamily. In terms of tissue distribution, expressed by acrorhagi.

Its subcellular location is the secreted. The protein localises to the nematocyst. Its function is as follows. Serine protease inhibitor that is strongly active against trypsin (950 IU/mg) and moderately active against plasmin. The sequence is that of PI-actitoxin-Afv2a from Anthopleura fuscoviridis (Sea anemone).